Reading from the N-terminus, the 394-residue chain is 2-aminobenzenesulfonate 2,3-dioxygenase subunit alpha (394 aa).

Positions 43–154 constitute a Rieske domain; the sequence is WKFVCHVSEI…TETYLGLVFV (112 aa). [2Fe-2S] cluster contacts are provided by C85, H87, C105, and H108. H209 and H213 together coordinate Fe cation.

It belongs to the bacterial ring-hydroxylating dioxygenase alpha subunit family. In terms of assembly, heterotetramer with a alpha2beta2 structure. Requires [2Fe-2S] cluster as cofactor. It depends on Fe cation as a cofactor.

The enzyme catalyses 2-aminobenzenesulfonate + NADH + O2 + 2 H(+) = 2,3-dihydroxybenzenesulfonate + NH4(+) + NAD(+). Inhibited by o-phenanthroline. Alpha subunit of the oxygenase component of the 2-aminobenzenesulfonate 2,3-dioxygenase system (deaminating) (ABSDOS). Can use 2-aminobenzenesulfonate (ABS), benzenesulfonate (BS), 4-toluenesulfonate (TS), 2-nitrobenzenesulfonate, 3- and 4-aminobenzenesulfonates, 4-chloro- and 4-hydroxybenzenesulfonates and pyridine-3-sulfonate as substrates. No desulfonation of ABS to aminocatechol or aminophenol detected. The protein is 2-aminobenzenesulfonate 2,3-dioxygenase subunit alpha of Alcaligenes sp.